The chain runs to 1006 residues: Collagen alpha-2(I) chain (1006 aa).

The tract at residues 1 to 84 is disordered; the sequence is SGGFDFSFLP…GFPGTPGLPG (84 aa). 4-hydroxyproline is present on residues Pro10, Pro13, Pro35, and Pro41. The span at 28–64 shows a compositional bias: low complexity; that stretch reads LMGPRGPPGASGAPGPQGFQGPAGEPGEPGQTGPAGA. Lys86 is modified (5-hydroxylysine; alternate). A glycan (O-linked (Gal...) hydroxylysine; alternate) is linked at Lys86. Positions 99–1006 are disordered; that stretch reads GQPGAAGVKG…FGYEGDFYRA (908 aa). Low complexity-rich tracts occupy residues 142–163 and 209–230; these read SRGSDGSVGPVGPAGPIGSAGP and PGANGLTGAKGAAGLPGVAGAP. A compositionally biased stretch (gly residues) spans 264-273; sequence GESGGKGEPG. Low complexity predominate over residues 274-284; that stretch reads SAGPQGPPGSS. Positions 306–315 are enriched in gly residues; that stretch reads GLRGGPGSRG. Residues 328–344 are compositionally biased toward low complexity; the sequence is PAGARGASGPAGVRGPS. Pro350 and Pro353 each carry 4-hydroxyproline. Residues 379–398 are compositionally biased toward low complexity; the sequence is LPGIDGRPGPIGPAGARGEA. A compositionally biased stretch (gly residues) spans 447 to 456; that stretch reads GVQGGKGEQG. Low complexity-rich tracts occupy residues 503–520 and 532–542; these read PGESGAVGPSGAIGSRGP and EPGVVGAPGTA. Gly residues predominate over residues 543 to 552; it reads GPAGSGGLPG. Composition is skewed to low complexity over residues 585 to 615 and 622 to 642; these read AVGAPGPAGATGDRGEAGAAGPAGPAGPRGS and VGPAGPNGFAGPAGAAGQPGA. A compositionally biased stretch (basic and acidic residues) spans 643–652; sequence KGERGTKGPK. Residues 660–670 show a composition bias toward low complexity; it reads PTGPVGSAGPA. The segment covering 680–689 has biased composition (gly residues); that stretch reads GSRGDGGPPG. Positions 691–700 are enriched in low complexity; it reads TGFPGAAGRT. Over residues 737-746 the composition is skewed to gly residues; it reads GETGAGGPPG. Low complexity-rich tracts occupy residues 754–781 and 789–799; these read SGEPGTAGPPGTAGPQGLLGAPGILGLP and LPGVAGAVGEP. Gly residues predominate over residues 800–810; it reads GPLGIGPPGAR. Over residues 837 to 882 the composition is skewed to low complexity; the sequence is YAGNPGPVGAAGAPGPHGAVGPAGKHGNRGEPGPVGSAGPVGALGP. The segment covering 892-903 has biased composition (basic and acidic residues); it reads RGDKGEAGDKGP. Residues 976 to 988 show a composition bias toward pro residues; that stretch reads SGPPGPPGPPGPP.

This sequence belongs to the fibrillar collagen family. As to quaternary structure, trimers of one alpha 2(I) and two alpha 1(I) chains. Interacts (via C-terminus) with TMEM131 (via PapD-L domain); the interaction is direct and is involved in assembly and TRAPPIII ER-to-Golgi transport complex-dependent secretion of collagen. Prolines at the third position of the tripeptide repeating unit (G-X-Y) are hydroxylated in some or all of the chains. Expressed in bones.

It is found in the secreted. Its subcellular location is the extracellular space. The protein localises to the extracellular matrix. Type I collagen is a member of group I collagen (fibrillar forming collagen). This Choloepus hoffmanni (Hoffmann's two-fingered sloth) protein is Collagen alpha-2(I) chain.